A 354-amino-acid chain; its full sequence is Uroporphyrinogen decarboxylase (354 aa).

Substrate is bound by residues 27–31 (RQAGR), D77, Y154, S209, and H327.

It belongs to the uroporphyrinogen decarboxylase family. In terms of assembly, homodimer.

The protein localises to the cytoplasm. It catalyses the reaction uroporphyrinogen III + 4 H(+) = coproporphyrinogen III + 4 CO2. The protein operates within porphyrin-containing compound metabolism; protoporphyrin-IX biosynthesis; coproporphyrinogen-III from 5-aminolevulinate: step 4/4. In terms of biological role, catalyzes the decarboxylation of four acetate groups of uroporphyrinogen-III to yield coproporphyrinogen-III. This is Uroporphyrinogen decarboxylase from Pseudoalteromonas translucida (strain TAC 125).